The primary structure comprises 306 residues: Putative dihydroorotate dehydrogenase A (fumarate) (306 aa).

FMN contacts are provided by residues serine 20 and lysine 44–glycine 45. Residues lysine 44 and asparagine 68–leucine 72 each bind substrate. FMN is bound by residues asparagine 98 and asparagine 126. A substrate-binding site is contributed by asparagine 126. The Nucleophile role is filled by cysteine 129. FMN contacts are provided by lysine 164 and isoleucine 190. Asparagine 191–threonine 192 lines the substrate pocket. Residues glycine 216, glycine 244–glycine 245, and glycine 266–threonine 267 contribute to the FMN site.

The protein belongs to the dihydroorotate dehydrogenase family. Type 1 subfamily. In terms of assembly, homodimer. The cofactor is FMN.

It localises to the cytoplasm. It carries out the reaction (S)-dihydroorotate + fumarate = orotate + succinate. Its pathway is pyrimidine metabolism; UMP biosynthesis via de novo pathway. Functionally, catalyzes the conversion of dihydroorotate to orotate with fumarate as the electron acceptor. This chain is Putative dihydroorotate dehydrogenase A (fumarate) (pyrD), found in Aquifex aeolicus (strain VF5).